The primary structure comprises 96 residues: MVSATRSLLCAALPVLATSRQATGAPVANELRCQCLQTVAGIHFKNIQSLKVMPPGPHCTQTEVIATLKNGREACLDPEAPMVQKIVQKMLKGVPK.

The N-terminal stretch at 1-24 (MVSATRSLLCAALPVLATSRQATG) is a signal peptide. Intrachain disulfides connect C33–C59 and C35–C75.

The protein belongs to the intercrine alpha (chemokine CxC) family. Monomer and homodimer. As to expression, at least expressed in the lung and trachea.

The protein resides in the secreted. Functionally, has chemotactic activity for neutrophils. Contributes to neutrophil activation during inflammation. The sequence is that of Growth-regulated alpha protein (Cxcl1) from Rattus norvegicus (Rat).